Reading from the N-terminus, the 199-residue chain is dITP/XTP pyrophosphatase (199 aa).

Substrate is bound at residue 8-13; the sequence is SGNAGK. The Proton acceptor role is filled by D69. D69 contributes to the Mg(2+) binding site. Residues S70, 154 to 157, K177, and 182 to 183 contribute to the substrate site; these read FGYN and HR.

It belongs to the HAM1 NTPase family. As to quaternary structure, homodimer. Mg(2+) is required as a cofactor.

The catalysed reaction is XTP + H2O = XMP + diphosphate + H(+). It carries out the reaction dITP + H2O = dIMP + diphosphate + H(+). It catalyses the reaction ITP + H2O = IMP + diphosphate + H(+). Functionally, pyrophosphatase that catalyzes the hydrolysis of nucleoside triphosphates to their monophosphate derivatives, with a high preference for the non-canonical purine nucleotides XTP (xanthosine triphosphate), dITP (deoxyinosine triphosphate) and ITP. Seems to function as a house-cleaning enzyme that removes non-canonical purine nucleotides from the nucleotide pool, thus preventing their incorporation into DNA/RNA and avoiding chromosomal lesions. This chain is dITP/XTP pyrophosphatase, found in Xylella fastidiosa (strain Temecula1 / ATCC 700964).